Consider the following 414-residue polypeptide: Relaxin-3 receptor 2 (414 aa).

Over 1–43 (MATSNSSASLPTLFWVNGSGDSVLSTDGAAMPVQFLVLRIMVA) the chain is Extracellular. N5 and N17 each carry an N-linked (GlcNAc...) asparagine glycan. The chain crosses the membrane as a helical span at residues 44 to 64 (LAYGLVGIIGLLGNLAVLWVL). Topologically, residues 65–77 (GNCGQRVPGLSSD) are cytoplasmic. The chain crosses the membrane as a helical span at residues 78–98 (TFVFSLALADLGLALTLPFWA). Residues 99–116 (TESAMDFHWPFGSALCKV) are Extracellular-facing. The cysteines at positions 114 and 191 are disulfide-linked. The chain crosses the membrane as a helical span at residues 117-137 (VLTTTVLSIYASTFLITALSI). The Cytoplasmic segment spans residues 138 to 155 (ARYWVVAMAVGPGSHLSV). The chain crosses the membrane as a helical span at residues 156–176 (FWARVVTLAVWVAAALVTVPT). Residues 177 to 209 (AIFGAEVELWGVCLCLLRFPSRYWLGAYQLQRV) are Extracellular-facing. Residues 210–230 (VLAFIVPLGVITTSYLLLLAF) traverse the membrane as a helical segment. Residues 231 to 255 (LERQQRCRPRQWQDSRVVARSVRVL) are Cytoplasmic-facing. A helical membrane pass occupies residues 256–276 (VASFALCWVPNHVVTLWEILV). Residues 277–293 (RFDLVPWDSTFYTFHTY) are Extracellular-facing. Residues 294–316 (ILPITTCLAHSNSCLNPVIYCLL) form a helical membrane-spanning segment. The Cytoplasmic portion of the chain corresponds to 317–414 (RREPQQVLVS…SQAAVSPGEV (98 aa)).

It belongs to the G-protein coupled receptor 1 family. Detected only in bone marrow.

Its subcellular location is the cell membrane. Functionally, high affinity receptor for INSL5. Also acts as a receptor for RLN3/relaxin-3, as well as bradykinin and kallidin. Binding of the ligand inhibit cAMP accumulation. The polypeptide is Relaxin-3 receptor 2 (Rxfp4) (Mus musculus (Mouse)).